Consider the following 262-residue polypeptide: Acyl-[acyl-carrier-protein]--UDP-N-acetylglucosamine O-acyltransferase (262 aa).

It belongs to the transferase hexapeptide repeat family. LpxA subfamily. In terms of assembly, homotrimer.

Its subcellular location is the cytoplasm. The enzyme catalyses a (3R)-hydroxyacyl-[ACP] + UDP-N-acetyl-alpha-D-glucosamine = a UDP-3-O-[(3R)-3-hydroxyacyl]-N-acetyl-alpha-D-glucosamine + holo-[ACP]. Its pathway is glycolipid biosynthesis; lipid IV(A) biosynthesis; lipid IV(A) from (3R)-3-hydroxytetradecanoyl-[acyl-carrier-protein] and UDP-N-acetyl-alpha-D-glucosamine: step 1/6. In terms of biological role, involved in the biosynthesis of lipid A, a phosphorylated glycolipid that anchors the lipopolysaccharide to the outer membrane of the cell. The chain is Acyl-[acyl-carrier-protein]--UDP-N-acetylglucosamine O-acyltransferase from Paraburkholderia phymatum (strain DSM 17167 / CIP 108236 / LMG 21445 / STM815) (Burkholderia phymatum).